The sequence spans 141 residues: N,N-dimethylformamidase alpha subunit (141 aa).

As to quaternary structure, heterotetramer of two DmfA1 (alpha) and two DmfA2 (beta) subunits.

It catalyses the reaction N,N-dimethylformamide + H2O = dimethylamine + formate. In terms of biological role, hydrolyzes N,N-dimethylformamide, and to a lesser extent N,N-dimethylacetamide and N,N-diethylacetamide. Has no activity against the substituted amides N-methylformamide, N-ethylformamide, N-ethylformamide and N-methylacetamide or the unsubstituted amides formamide, nicotinamide, acetoamide, benzamide, acetamide and acrylamide. This is N,N-dimethylformamidase alpha subunit from Paracoccus aminophilus.